A 363-amino-acid chain; its full sequence is Glutamate--cysteine ligase (363 aa).

This sequence belongs to the glutamate--cysteine ligase type 2 family. YbdK subfamily.

The enzyme catalyses L-cysteine + L-glutamate + ATP = gamma-L-glutamyl-L-cysteine + ADP + phosphate + H(+). Its function is as follows. Catalyzes the synthesis of gamma-glutamylcysteine (gamma-GC), the main low-molecular-weight thiol compound instead of glutathione in halophilic archaea. The sequence is that of Glutamate--cysteine ligase from Haloquadratum walsbyi (strain DSM 16790 / HBSQ001).